Consider the following 400-residue polypeptide: Probable tRNA sulfurtransferase (400 aa).

Residues 60–164 (EPIIEKLKNV…KEATYITSGT (105 aa)) form the THUMP domain. Residues 182 to 183 (LL), 207 to 208 (HF), Arg-264, Gly-286, and Gln-295 contribute to the ATP site.

The protein belongs to the ThiI family.

It is found in the cytoplasm. It catalyses the reaction [ThiI sulfur-carrier protein]-S-sulfanyl-L-cysteine + a uridine in tRNA + 2 reduced [2Fe-2S]-[ferredoxin] + ATP + H(+) = [ThiI sulfur-carrier protein]-L-cysteine + a 4-thiouridine in tRNA + 2 oxidized [2Fe-2S]-[ferredoxin] + AMP + diphosphate. It carries out the reaction [ThiS sulfur-carrier protein]-C-terminal Gly-Gly-AMP + S-sulfanyl-L-cysteinyl-[cysteine desulfurase] + AH2 = [ThiS sulfur-carrier protein]-C-terminal-Gly-aminoethanethioate + L-cysteinyl-[cysteine desulfurase] + A + AMP + 2 H(+). It participates in cofactor biosynthesis; thiamine diphosphate biosynthesis. Catalyzes the ATP-dependent transfer of a sulfur to tRNA to produce 4-thiouridine in position 8 of tRNAs, which functions as a near-UV photosensor. Also catalyzes the transfer of sulfur to the sulfur carrier protein ThiS, forming ThiS-thiocarboxylate. This is a step in the synthesis of thiazole, in the thiamine biosynthesis pathway. The sulfur is donated as persulfide by IscS. The protein is Probable tRNA sulfurtransferase of Oceanobacillus iheyensis (strain DSM 14371 / CIP 107618 / JCM 11309 / KCTC 3954 / HTE831).